A 180-amino-acid polypeptide reads, in one-letter code: Large ribosomal subunit protein uL5 (180 aa).

The protein belongs to the universal ribosomal protein uL5 family. As to quaternary structure, part of the 50S ribosomal subunit; part of the 5S rRNA/L5/L18/L25 subcomplex. Contacts the 5S rRNA and the P site tRNA. Forms a bridge to the 30S subunit in the 70S ribosome.

This is one of the proteins that bind and probably mediate the attachment of the 5S RNA into the large ribosomal subunit, where it forms part of the central protuberance. In the 70S ribosome it contacts protein S13 of the 30S subunit (bridge B1b), connecting the 2 subunits; this bridge is implicated in subunit movement. Contacts the P site tRNA; the 5S rRNA and some of its associated proteins might help stabilize positioning of ribosome-bound tRNAs. The polypeptide is Large ribosomal subunit protein uL5 (Synechococcus sp. (strain JA-2-3B'a(2-13)) (Cyanobacteria bacterium Yellowstone B-Prime)).